Reading from the N-terminus, the 338-residue chain is Legumin B (338 aa).

Residues 16-162 are disordered; the sequence is SLNTKEDTAK…RQHSKGRKNG (147 aa). Positions 18-44 are enriched in basic and acidic residues; that stretch reads NTKEDTAKRLRSPQDERGQIVKVEDGL. 2 stretches are compositionally biased toward acidic residues: residues 82–92 and 136–150; these read DEDEDEEEEEE and EEEE…EEEE. The 148-residue stretch at 174 to 321 folds into the Cupin type-1 domain; the sequence is ENIARPSRGD…AFGLRHSQVA (148 aa).

The protein belongs to the 11S seed storage protein (globulins) family. As to quaternary structure, hexamer; each subunit is composed of an acidic and a basic chain derived from a single precursor and linked by a disulfide bond.

Functionally, this protein found in the seeds of many leguminous and non-leguminous plants is the source of sulfur-containing amino acids in seed meals. This is Legumin B (LEGB) from Pisum sativum (Garden pea).